Here is a 572-residue protein sequence, read N- to C-terminus: Proline--tRNA ligase (572 aa).

This sequence belongs to the class-II aminoacyl-tRNA synthetase family. ProS type 1 subfamily. As to quaternary structure, homodimer.

Its subcellular location is the cytoplasm. It carries out the reaction tRNA(Pro) + L-proline + ATP = L-prolyl-tRNA(Pro) + AMP + diphosphate. Functionally, catalyzes the attachment of proline to tRNA(Pro) in a two-step reaction: proline is first activated by ATP to form Pro-AMP and then transferred to the acceptor end of tRNA(Pro). As ProRS can inadvertently accommodate and process non-cognate amino acids such as alanine and cysteine, to avoid such errors it has two additional distinct editing activities against alanine. One activity is designated as 'pretransfer' editing and involves the tRNA(Pro)-independent hydrolysis of activated Ala-AMP. The other activity is designated 'posttransfer' editing and involves deacylation of mischarged Ala-tRNA(Pro). The misacylated Cys-tRNA(Pro) is not edited by ProRS. This chain is Proline--tRNA ligase, found in Caldicellulosiruptor saccharolyticus (strain ATCC 43494 / DSM 8903 / Tp8T 6331).